Consider the following 280-residue polypeptide: Bifunctional protein FolD (280 aa).

NADP(+) contacts are provided by residues 161–163 (GRS), S186, and I227.

Belongs to the tetrahydrofolate dehydrogenase/cyclohydrolase family. In terms of assembly, homodimer.

It carries out the reaction (6R)-5,10-methylene-5,6,7,8-tetrahydrofolate + NADP(+) = (6R)-5,10-methenyltetrahydrofolate + NADPH. The enzyme catalyses (6R)-5,10-methenyltetrahydrofolate + H2O = (6R)-10-formyltetrahydrofolate + H(+). Its pathway is one-carbon metabolism; tetrahydrofolate interconversion. Its function is as follows. Catalyzes the oxidation of 5,10-methylenetetrahydrofolate to 5,10-methenyltetrahydrofolate and then the hydrolysis of 5,10-methenyltetrahydrofolate to 10-formyltetrahydrofolate. The polypeptide is Bifunctional protein FolD (Caldanaerobacter subterraneus subsp. tengcongensis (strain DSM 15242 / JCM 11007 / NBRC 100824 / MB4) (Thermoanaerobacter tengcongensis)).